A 588-amino-acid polypeptide reads, in one-letter code: Protein kintoun (588 aa).

Disordered stretches follow at residues 199–223 (PGYE…PENS), 338–498 (PPLE…SSQE), and 510–535 (AANV…ADED). Positions 202–212 (EAKEPPEERDL) are enriched in basic and acidic residues. Positions 350-361 (PNPTSDPQNENQ) are enriched in polar residues. 2 stretches are compositionally biased toward basic and acidic residues: residues 362 to 382 (TRVE…HQRG) and 393 to 433 (QVLE…KFEL). Residues 435–447 (DVQQENKGNCSNT) show a composition bias toward polar residues. Positions 448–460 (KEVKCCRRTKDSL) are enriched in basic and acidic residues.

This sequence belongs to the PIH1 family. Kintoun subfamily.

It localises to the cytoplasm. It is found in the dynein axonemal particle. Required for cytoplasmic pre-assembly of axonemal dyneins, thereby playing a central role in motility in cilia and flagella. Involved in pre-assembly of dynein arm complexes in the cytoplasm before intraflagellar transport loads them for the ciliary compartment. The polypeptide is Protein kintoun (Oryzias latipes (Japanese rice fish)).